The primary structure comprises 462 residues: Phospho-2-dehydro-3-deoxyheptonate aldolase AroG (462 aa).

Cys87 is a binding site for Mn(2+). Phosphoenolpyruvate contacts are provided by residues Arg126, 283-284, Lys306, and Arg337; that span reads ER. Positions 369, 411, and 441 each coordinate Mn(2+).

As to quaternary structure, homodimer. Interacts with Rv0948c. It depends on Mn(2+) as a cofactor. The cofactor is Co(2+). Cd(2+) serves as cofactor.

The catalysed reaction is D-erythrose 4-phosphate + phosphoenolpyruvate + H2O = 7-phospho-2-dehydro-3-deoxy-D-arabino-heptonate + phosphate. It functions in the pathway metabolic intermediate biosynthesis; chorismate biosynthesis; chorismate from D-erythrose 4-phosphate and phosphoenolpyruvate: step 1/7. Feedback inhibited by tryptophan, tyrosine, phenylalanine and chorismate. Catalyzes an aldol-like condensation reaction between phosphoenolpyruvate (PEP) and D-erythrose 4-phosphate (E4P) to generate 3-deoxy-D-arabino-heptulosonate 7-phosphate (DAH7P) and inorganic phosphate. The chain is Phospho-2-dehydro-3-deoxyheptonate aldolase AroG (aroG) from Mycobacterium tuberculosis (strain ATCC 25618 / H37Rv).